The primary structure comprises 296 residues: Protein-export membrane protein SecF (296 aa).

The next 6 membrane-spanning stretches (helical) occupy residues 23–43, 144–164, 169–189, 194–214, 236–256, and 265–285; these read MIIYPLIVFGIAIIIIIANYV, AIVYAFIGMAIVVFLFFRVPV, VVFSAFSDMIIAIALMNIFGI, ATIAALLMLIGYSVDSNILLT, GFTMSTTTLGALASLWIFSTA, and VLIFGLLADFMNTWILNAGVL.

Belongs to the SecD/SecF family. SecF subfamily. Part of the protein translocation apparatus. Forms a complex with SecD.

The protein localises to the cell membrane. Functionally, involved in protein export. The sequence is that of Protein-export membrane protein SecF from Pyrococcus furiosus (strain ATCC 43587 / DSM 3638 / JCM 8422 / Vc1).